Here is a 295-residue protein sequence, read N- to C-terminus: NAD kinase (295 aa).

The Proton acceptor role is filled by Asp74. Residues 74 to 75 (DG), 148 to 149 (ND), His159, Arg176, Asp178, and 189 to 194 (TAYALS) contribute to the NAD(+) site.

The protein belongs to the NAD kinase family. It depends on a divalent metal cation as a cofactor.

The protein resides in the cytoplasm. It catalyses the reaction NAD(+) + ATP = ADP + NADP(+) + H(+). In terms of biological role, involved in the regulation of the intracellular balance of NAD and NADP, and is a key enzyme in the biosynthesis of NADP. Catalyzes specifically the phosphorylation on 2'-hydroxyl of the adenosine moiety of NAD to yield NADP. This chain is NAD kinase, found in Legionella pneumophila (strain Paris).